The primary structure comprises 614 residues: MIKKASLLTACSVTAFSAWAQDTSPDTLVVTANRFEQPRSTVLAPTTVVTRQDIDRWQSTSVNDVLRRLPGVDITQNGGSGQLSSIFIRGTNASHVLVLIDGVRLNLAGGSGSADLSQFPIALVQRVEYIRGPRSAVYGSDAIGGVVNIITTRDEPGTEISAGWGSNSYQNYDVSTQQQLGDKTRVTLLGDYAHTHGYDVVAYGNTGTQAQPDNDGFLSKTLYGALEHNFTDAWSGFVRGYGYDNRTNYDAYYSPGSPLVDTRKLYSQSWDAGLRYNGELIKSQLITSYSHSKDYNYDPHYGRYDSSATLDEMKQYTVQWANNIIIGHGNVGAGVDWQKQSTAPGTAYVKDGYDQRNTGIYLTGLQQVGDFTFEGAARSDDNSQFGRHGTWQTSAGWEFIEGYRFIASYGTSYKAPNLGQLYGFYGNPNLDPEKSKQWEGAFEGLTAGVNWRISGYRNDVSDLIDYDDHTLKYYNEGKARIKGVEATANFDTGPLTHTVSYDYVDARNAITDTPLLRRAKQQVKYQLDWQLYDFDWGITYQYLGTRYDKDYSSYPYQTVKMGGVSLWDLAVAYPVTSHLTVRGKIANLFDKDYETVYGYQTAGREYTLSGSYTF.

A signal peptide spans 1–20 (MIKKASLLTACSVTAFSAWA). The TonB box motif lies at 26–33 (DTLVVTAN). The TBDR plug domain maps to 38–152 (PRSTVLAPTT…IGGVVNIITT (115 aa)). Cyanocob(III)alamin-binding positions include Leu83, Ser85, Asn92, and 110-111 (GS). Residues 155–614 (EPGTEISAGW…EYTLSGSYTF (460 aa)) form the TBDR beta-barrel domain. Transmembrane regions (beta stranded) follow at residues 158–165 (TEISAGWG), 169–178 (YQNYDVSTQQ), and 184–195 (TRVTLLGDYAHT). Positions 199, 211, 213, and 215 each coordinate Ca(2+). Beta stranded transmembrane passes span 217–227 (FLSKTLYGALE) and 232–248 (DAWS…NRTN). 2 residues coordinate Ca(2+): Tyr249 and Asp250. Ala251 serves as a coordination point for cyanocob(III)alamin. Asp261 is a binding site for Ca(2+). Transmembrane regions (beta stranded) follow at residues 263–277 (RKLY…LRYN), 279–296 (ELIK…KDYN), 309–325 (TLDE…NNII), 328–337 (HGNVGAGVDW), 353–369 (YDQR…QQVG), 371–381 (FTFEGAARSDD), 385–400 (FGRH…WEFI), 403–417 (YRFI…KAPN), 434–443 (KSKQWEGAFE), 449–458 (VNWRISGYRN), 473–490 (YYNE…TANF), 494–509 (PLTH…ARNA), 517–529 (RRAK…QLDW), and 535–550 (DWGI…YDKD). A cyanocob(III)alamin-binding site is contributed by Thr309. Arg517 contributes to the cyanocob(III)alamin binding site. Tyr551 contacts cyanocob(III)alamin. Beta stranded transmembrane passes span 558-572 (TVKM…LAVA), 585-596 (IANLFDKDYETV), and 602-614 (AGRE…SYTF). The TonB C-terminal box motif lies at 597–614 (YGYQTAGREYTLSGSYTF).

The protein belongs to the TonB-dependent receptor family. BtuB (TC 1.B.14.3.1) subfamily.

Its subcellular location is the cell outer membrane. In terms of biological role, involved in the active translocation of vitamin B12 (cyanocobalamin) across the outer membrane to the periplasmic space. It derives its energy for transport by interacting with the trans-periplasmic membrane protein TonB. The chain is Vitamin B12 transporter BtuB from Escherichia coli O157:H7.